The primary structure comprises 116 residues: Ribosome-binding factor A (116 aa).

Belongs to the RbfA family. Monomer. Binds 30S ribosomal subunits, but not 50S ribosomal subunits or 70S ribosomes.

The protein resides in the cytoplasm. Its function is as follows. One of several proteins that assist in the late maturation steps of the functional core of the 30S ribosomal subunit. Associates with free 30S ribosomal subunits (but not with 30S subunits that are part of 70S ribosomes or polysomes). Required for efficient processing of 16S rRNA. May interact with the 5'-terminal helix region of 16S rRNA. In Enterococcus faecalis (strain ATCC 700802 / V583), this protein is Ribosome-binding factor A.